We begin with the raw amino-acid sequence, 473 residues long: Glutamate-1-semialdehyde 2,1-aminomutase, chloroplastic (473 aa).

The N-terminal 37 residues, 1–37, are a transit peptide targeting the chloroplast; it reads MSATLTGSGTALGFSCSSKISKRVSSSPSTRCSIKMS. K313 is subject to N6-(pyridoxal phosphate)lysine.

The protein belongs to the class-III pyridoxal-phosphate-dependent aminotransferase family. HemL subfamily. In terms of assembly, homodimer. Pyridoxal 5'-phosphate is required as a cofactor.

Its subcellular location is the plastid. It localises to the chloroplast. The catalysed reaction is (S)-4-amino-5-oxopentanoate = 5-aminolevulinate. It functions in the pathway porphyrin-containing compound metabolism; protoporphyrin-IX biosynthesis; 5-aminolevulinate from L-glutamyl-tRNA(Glu): step 2/2. The protein operates within porphyrin-containing compound metabolism; chlorophyll biosynthesis. The polypeptide is Glutamate-1-semialdehyde 2,1-aminomutase, chloroplastic (GSA) (Brassica napus (Rape)).